We begin with the raw amino-acid sequence, 214 residues long: LexA repressor (214 aa).

A DNA-binding region (H-T-H motif) is located at residues 28-48 (IRDIQRELSISSTSVVAYNLR). Active-site for autocatalytic cleavage activity residues include Ser133 and Lys172.

This sequence belongs to the peptidase S24 family. As to quaternary structure, homodimer.

It catalyses the reaction Hydrolysis of Ala-|-Gly bond in repressor LexA.. In terms of biological role, represses a number of genes involved in the response to DNA damage (SOS response), including recA and lexA. In the presence of single-stranded DNA, RecA interacts with LexA causing an autocatalytic cleavage which disrupts the DNA-binding part of LexA, leading to derepression of the SOS regulon and eventually DNA repair. The sequence is that of LexA repressor from Herpetosiphon aurantiacus (strain ATCC 23779 / DSM 785 / 114-95).